The sequence spans 340 residues: DNA repair protein RAD51 homolog B (340 aa).

The tract at residues 1–22 is disordered; sequence MSSSSAHQKASPPIEEEATEHG. The HhH domain occupies 49 to 78; the sequence is TVESVAYSPRKDLLQIKGISEAKVDKIIEA. 128–135 is a binding site for ATP; it reads GEFRSGKT.

It belongs to the RecA family. RAD51 subfamily. Self-associates and may interact with XRCC3 homolog. As to expression, highly expressed in mitotic and meiotic tissues, but low levels in differentiated tissues.

The protein localises to the nucleus. In terms of biological role, binds to single and double-stranded DNA and exhibits DNA-dependent ATPase activity. Unwinds duplex DNA. Component of the meiotic recombination pathway. Seems to play a role in mediating chromosome homology search, chromosome pairing and synapsis at early stages and probably chromosome crossing-over at later stages in meiosis. Probably is involved in the repair of meiotic double strand breaks (DBSs) and in homologous recombination. The polypeptide is DNA repair protein RAD51 homolog B (RAD51B) (Zea mays (Maize)).